Consider the following 384-residue polypeptide: ATP phosphoribosyltransferase regulatory subunit (384 aa).

The protein belongs to the class-II aminoacyl-tRNA synthetase family. HisZ subfamily. In terms of assembly, heteromultimer composed of HisG and HisZ subunits.

Its subcellular location is the cytoplasm. It participates in amino-acid biosynthesis; L-histidine biosynthesis; L-histidine from 5-phospho-alpha-D-ribose 1-diphosphate: step 1/9. In terms of biological role, required for the first step of histidine biosynthesis. May allow the feedback regulation of ATP phosphoribosyltransferase activity by histidine. This chain is ATP phosphoribosyltransferase regulatory subunit, found in Paracidovorax citrulli (strain AAC00-1) (Acidovorax citrulli).